Reading from the N-terminus, the 89-residue chain is Small ribosomal subunit protein uS14A (89 aa).

It belongs to the universal ribosomal protein uS14 family. As to quaternary structure, part of the 30S ribosomal subunit. Contacts proteins S3 and S10.

In terms of biological role, binds 16S rRNA, required for the assembly of 30S particles and may also be responsible for determining the conformation of the 16S rRNA at the A site. The sequence is that of Small ribosomal subunit protein uS14A from Streptococcus equi subsp. zooepidemicus (strain MGCS10565).